A 497-amino-acid chain; its full sequence is E3 ubiquitin-protein ligase CBL-C (497 aa).

The tract at residues 7-145 (PQGWQWGEPR…SALFPEGKYC (139 aa)) is 4H. The Cbl-PTB domain maps to 7-321 (PQGWQWGEPR…GKNHNPDLTE (315 aa)). Residues 146-218 (GHLYQITKGS…FEFDIFTRLF (73 aa)) are EF-hand-like. The Ca(2+) site is built by Asp-199, Thr-201, and Glu-210. An SH2-like region spans residues 219–321 (QPWPTLLKNW…GKNHNPDLTE (103 aa)). Arg-264 contributes to the 4-O-phospho-L-tyrosine binding site. A linker region spans residues 322–350 (LCRAVLNQCIQVSQEQLQLYQAMNSTFEL). The residue at position 341 (Tyr-341) is a Phosphotyrosine; by SRC. An RING-type zinc finger spans residues 351–390 (CKICTERDKDVRIEPCGHLLCSCCLAAWQHSDSQTCPFCR). Residues 351–497 (CKICTERDKD…QVREGATESS (147 aa)) form an interaction with RET region.

Interacts with Ubiquitin-conjugating enzyme E2 UBE2D2 and UBE2D3. Interacts with EGFR (tyrosine phosphorylated). Interacts with the SH3 domain proteins LYN and CRK. Interacts (via RING-type zinc finger) with TGFB1I1 (via LIM zinc-binding domain 2); the interaction is direct and enhances the E3 activity. Interacts directly with RET (inactive) and CD2AP; dissociates from RET upon RET activation by GDNF which also increases the interaction with CD2AP suggesting dissociation as CBLC:CD2AP complex. Interacts with SRC; the interaction is enhanced when SRC is phosphorylated at 'Tyr-419'. In terms of processing, phosphorylated on multiple tyrosine residues by SRC. Autoubiquitinated, when phosphorylated at Tyr-341.

The enzyme catalyses S-ubiquitinyl-[E2 ubiquitin-conjugating enzyme]-L-cysteine + [acceptor protein]-L-lysine = [E2 ubiquitin-conjugating enzyme]-L-cysteine + N(6)-ubiquitinyl-[acceptor protein]-L-lysine.. Phosphorylation at Tyr-341 is necessary and sufficient for the activation of E3 activity. Acts as an E3 ubiquitin-protein ligase, which accepts ubiquitin from specific E2 ubiquitin-conjugating enzymes, and then transfers it to substrates promoting their degradation by the proteasome. Functionally coupled with the E2 ubiquitin-protein ligases UB2D1, UB2D2 and UB2D3. Regulator of EGFR mediated signal transduction; upon EGF activation, ubiquitinates EGFR. Inhibits EGF stimulated MAPK1 activation. Promotes ubiquitination of SRC phosphorylated at 'Tyr-419', has the highest ubiquitin ligase activity among CBL family proteins. In collaboration with CD2AP may act as regulatory checkpoint for Ret signaling by modulating the rate of RET degradation after ligand activation; CD2AP converts it from an inhibitor to a promoter of RET degradation; the function limits the potency of GDNF on neuronal survival. The chain is E3 ubiquitin-protein ligase CBL-C (Cblc) from Rattus norvegicus (Rat).